A 969-amino-acid chain; its full sequence is NKSRKRRNRVSFLGAATVEPPKPIPLTWKTEKPVWVNQWPLPKQKLEALHLLANEQLEKGHIEPSFSPWNSPVFVIQKKSGKWRMLTDLRAVNAVIQPMGPLQPGLPSPAMIPKDWPLIIIDLKDCFFTIPLAEQDCEKFAFTIPAINNKEPATRFQWKVLPQGMLNSPTICQTFVGRALQPVREKFSDCYIIHYIDDILCAAETKDKLIDCYTFLQAEVANAGLAIASDKIQTSTPFHYLGMQIENRKIKPQKIEIRKDTLKTLNDFQKLLGDINWIRPTLGIPTYAMSNLFSILRGDSDLNSKRILTPEATKEIKLVEEKIQSAQINRIDPLAPLQLLIFATAHSPTGIIIQNTDLVEWSFLPHSTVKTFTLYLDQIATLIGQTRLRIIKLCGNDPDKIVVPLTKEQVRQAFINSGAWQIGLANFVGIIDNHYPKTKIFQFLKMTTWILPKITRREPLENALTVFTDGSSNGKAAYTGPKERVIKTPYQSAQRAELVAVITVLQDFDQPINIISDSAYVVQATRDVETALIKYSMDDQLNQLFNLLQQTVRKRNFPFYITHIRAHTNLPGPLTKANEEADLLVSSALIKAQELHALTHVNAAGLKNKFDVTWKQAKDIVQHCTQCQVLHLPTQEAGVNPRGLCPNALWQMDVTHVPSFGRLSYVHVTVDTYSHFIWATCQTGESTSHVKKHLLSCFAVMGVPEKIKTDNGPGYCSKAFQKFLSQWKISHTTGIPYNSQGQAIVERTNRTLKTQLVKQKEGGDSKECTTPQMQLNLALYTLNFLNIYRNQTTTSAEQHLTGKKNSPHEGKLIWWKDNKNKTWEIGKVITWGRGFACVSPGENQLPVWIPTRHLKFYNEPIGDAKKRASTEMVTPVTWMDNPIEVYVNDSVWVPGPTDDRCPAKPEEEGMMINISIGYRYPPICLGRAPGCLMPTVQNWLVEVPIVSPICRFTYHMVSGMSLRPRVNYL.

In terms of domain architecture, Reverse transcriptase spans 57 to 245 (LEKGHIEPSF…TPFHYLGMQI (189 aa)). The LPQG motif lies at 161–164 (LPQG). One can recognise an RNase H type-1 domain in the interval 460 to 590 (LENALTVFTD…ADLLVSSALI (131 aa)). Residues Asp469, Glu497, Asp517, and Asp582 each coordinate Mg(2+). The Integrase-type zinc-finger motif lies at 587–628 (SALIKAQELHALTHVNAAGLKNKFDVTWKQAKDIVQHCTQCQ). Zn(2+)-binding residues include His596, His600, Cys624, and Cys627. The region spanning 642 to 803 (RGLCPNALWQ…TSAEQHLTGK (162 aa)) is the Integrase catalytic domain. Residues 811–859 (KLIWWKDNKNKTWEIGKVITWGRGFACVSPGENQLPVWIPTRHLKFYNE) constitute a DNA-binding region (integrase-type).

It belongs to the beta type-B retroviral polymerase family. HERV class-II K(HML-2) pol subfamily.

The enzyme catalyses DNA(n) + a 2'-deoxyribonucleoside 5'-triphosphate = DNA(n+1) + diphosphate. It catalyses the reaction Endonucleolytic cleavage to 5'-phosphomonoester.. Its function is as follows. Early post-infection, the reverse transcriptase converts the viral RNA genome into double-stranded viral DNA. The RNase H domain of the reverse transcriptase performs two functions. It degrades the RNA template and specifically removes the RNA primer from the RNA/DNA hybrid. Following nuclear import, the integrase catalyzes the insertion of the linear, double-stranded viral DNA into the host cell chromosome. Endogenous Pol proteins may have kept, lost or modified their original function during evolution. This is Endogenous retrovirus group K member 11 Pol protein (ERVK-11) from Homo sapiens (Human).